The primary structure comprises 164 residues: S-ribosylhomocysteine lyase (164 aa).

3 residues coordinate Fe cation: H61, H65, and C131.

Belongs to the LuxS family. As to quaternary structure, homodimer. Fe cation serves as cofactor.

It catalyses the reaction S-(5-deoxy-D-ribos-5-yl)-L-homocysteine = (S)-4,5-dihydroxypentane-2,3-dione + L-homocysteine. Involved in the synthesis of autoinducer 2 (AI-2) which is secreted by bacteria and is used to communicate both the cell density and the metabolic potential of the environment. The regulation of gene expression in response to changes in cell density is called quorum sensing. Catalyzes the transformation of S-ribosylhomocysteine (RHC) to homocysteine (HC) and 4,5-dihydroxy-2,3-pentadione (DPD). This Bifidobacterium longum (strain NCC 2705) protein is S-ribosylhomocysteine lyase.